The primary structure comprises 941 residues: ATP-dependent 6-phosphofructokinase subunit beta (941 aa).

Residues 2–558 (PDASLFNGTS…HMKNFISTNS (557 aa)) are N-terminal catalytic PFK domain 1. ATP-binding positions include glycine 191, 255–256 (RC), and 285–288 (GDGS). Aspartate 286 lines the Mg(2+) pocket. Residues 331–333 (SID), arginine 368, 375–377 (MGR), glutamate 432, arginine 460, and 466–469 (HVQR) contribute to the beta-D-fructose 6-phosphate site. Aspartate 333 serves as the catalytic Proton acceptor. The segment at 559 to 572 (ADHVPPSLPLEKRK) is interdomain linker. The C-terminal regulatory PFK domain 2 stretch occupies residues 573–941 (KVAIINVGAP…SDMLSGRTSL (369 aa)). Beta-D-fructose 2,6-bisphosphate is bound by residues arginine 643, 701-705 (TISNN), arginine 739, 746-748 (QGG), glutamate 806, lysine 832, 838-841 (HVQQ), and arginine 918.

It belongs to the phosphofructokinase type A (PFKA) family. ATP-dependent PFK group I subfamily. Eukaryotic two domain clade 'E' sub-subfamily. As to quaternary structure, heterododecamer of 4 alpha, 4 beta and 4 gamma chains. The gamma chain bridges the N-terminal halves of the alpha and beta subunits. Mg(2+) serves as cofactor.

The protein localises to the cytoplasm. The enzyme catalyses beta-D-fructose 6-phosphate + ATP = beta-D-fructose 1,6-bisphosphate + ADP + H(+). Its pathway is carbohydrate degradation; glycolysis; D-glyceraldehyde 3-phosphate and glycerone phosphate from D-glucose: step 3/4. Allosterically activated by ADP, AMP, or fructose 2,6-bisphosphate, and allosterically inhibited by ATP or citrate. Its function is as follows. Catalyzes the phosphorylation of D-fructose 6-phosphate to fructose 1,6-bisphosphate by ATP, the first committing step of glycolysis. The protein is ATP-dependent 6-phosphofructokinase subunit beta (PFK2) of Komagataella phaffii (strain GS115 / ATCC 20864) (Yeast).